Reading from the N-terminus, the 307-residue chain is Glycine--tRNA ligase alpha subunit (307 aa).

Belongs to the class-II aminoacyl-tRNA synthetase family. As to quaternary structure, tetramer of two alpha and two beta subunits.

The protein localises to the cytoplasm. It carries out the reaction tRNA(Gly) + glycine + ATP = glycyl-tRNA(Gly) + AMP + diphosphate. The polypeptide is Glycine--tRNA ligase alpha subunit (Levilactobacillus brevis (strain ATCC 367 / BCRC 12310 / CIP 105137 / JCM 1170 / LMG 11437 / NCIMB 947 / NCTC 947) (Lactobacillus brevis)).